The chain runs to 345 residues: Phenylalanine--tRNA ligase alpha subunit (345 aa).

Position 259 (E259) interacts with Mg(2+).

The protein belongs to the class-II aminoacyl-tRNA synthetase family. Phe-tRNA synthetase alpha subunit type 1 subfamily. Tetramer of two alpha and two beta subunits. The cofactor is Mg(2+).

The protein resides in the cytoplasm. It catalyses the reaction tRNA(Phe) + L-phenylalanine + ATP = L-phenylalanyl-tRNA(Phe) + AMP + diphosphate + H(+). This chain is Phenylalanine--tRNA ligase alpha subunit, found in Nitrosomonas europaea (strain ATCC 19718 / CIP 103999 / KCTC 2705 / NBRC 14298).